Here is a 258-residue protein sequence, read N- to C-terminus: MIVNECLFFTIALCDAAEPWQLGFQDAATPMMQGIIDLHHDILFFLILILVFVLWILVRALWHFYYKKNPIPQRIVHGTTIEILWTIFPSIILMFIAIPSFALLYSMDEVVVDPAMTLKAIGHQWYWTYEYSDYNSSDEQSLTFDSYMIPEDDLELGQLRLLEVDNRVVVPVKTNLRLIVTSADVLHSWAVPSLGVKCDAVPGRLNQISMLVQREGVYYGQCSEICGTNHAFMPIVIEAVSATDYTNWVSNLFIPPTS.

Residues 1–41 (MIVNECLFFTIALCDAAEPWQLGFQDAATPMMQGIIDLHHD) lie on the Mitochondrial intermembrane side of the membrane. Residues 42–58 (ILFFLILILVFVLWILV) form a helical membrane-spanning segment. The Mitochondrial matrix segment spans residues 59-82 (RALWHFYYKKNPIPQRIVHGTTIE). Residues 83–104 (ILWTIFPSIILMFIAIPSFALL) traverse the membrane as a helical segment. At 105–258 (YSMDEVVVDP…VSNLFIPPTS (154 aa)) the chain is on the mitochondrial intermembrane side. Histidine 187, cysteine 222, glutamate 224, cysteine 226, histidine 230, and methionine 233 together coordinate Cu cation. Residue glutamate 224 coordinates Mg(2+).

This sequence belongs to the cytochrome c oxidase subunit 2 family. Component of the cytochrome c oxidase (complex IV, CIV), a multisubunit enzyme composed of a catalytic core of 3 subunits and several supernumerary subunits. The complex exists as a monomer or a dimer and forms supercomplexes (SCs) in the inner mitochondrial membrane with ubiquinol-cytochrome c oxidoreductase (cytochrome b-c1 complex, complex III, CIII). Cu cation serves as cofactor.

The protein localises to the mitochondrion inner membrane. The catalysed reaction is 4 Fe(II)-[cytochrome c] + O2 + 8 H(+)(in) = 4 Fe(III)-[cytochrome c] + 2 H2O + 4 H(+)(out). Functionally, component of the cytochrome c oxidase, the last enzyme in the mitochondrial electron transport chain which drives oxidative phosphorylation. The respiratory chain contains 3 multisubunit complexes succinate dehydrogenase (complex II, CII), ubiquinol-cytochrome c oxidoreductase (cytochrome b-c1 complex, complex III, CIII) and cytochrome c oxidase (complex IV, CIV), that cooperate to transfer electrons derived from NADH and succinate to molecular oxygen, creating an electrochemical gradient over the inner membrane that drives transmembrane transport and the ATP synthase. Cytochrome c oxidase is the component of the respiratory chain that catalyzes the reduction of oxygen to water. Electrons originating from reduced cytochrome c in the intermembrane space (IMS) are transferred via the dinuclear copper A center (CU(A)) of subunit 2 and heme A of subunit 1 to the active site in subunit 1, a binuclear center (BNC) formed by heme A3 and copper B (CU(B)). The BNC reduces molecular oxygen to 2 water molecules using 4 electrons from cytochrome c in the IMS and 4 protons from the mitochondrial matrix. In Oenothera berteroana (Bertero's evening primrose), this protein is Cytochrome c oxidase subunit 2 (COX2).